Consider the following 139-residue polypeptide: Arsenate reductase (139 aa).

Catalysis depends on nucleophile residues Cys10, Cys82, and Cys89. 2 disulfides stabilise this stretch: Cys10/Cys82 and Cys82/Cys89.

It belongs to the low molecular weight phosphotyrosine protein phosphatase family. Thioredoxin-coupled ArsC subfamily. Monomer.

Its subcellular location is the cytoplasm. It carries out the reaction arsenate + [thioredoxin]-dithiol + H(+) = arsenite + [thioredoxin]-disulfide + H2O. Its activity is regulated as follows. Activity is potassium and sulfate-independent. Its function is as follows. Catalyzes the reduction of arsenate [As(V)] to arsenite [As(III)]. In vitro, can dephosphorylate para-nitrophenyl phosphate (pNPP). The sequence is that of Arsenate reductase from Bacillus subtilis (strain 168).